The following is a 68-amino-acid chain: UPF0434 protein H16_A0605 (68 aa).

The protein belongs to the UPF0434 family.

In Cupriavidus necator (strain ATCC 17699 / DSM 428 / KCTC 22496 / NCIMB 10442 / H16 / Stanier 337) (Ralstonia eutropha), this protein is UPF0434 protein H16_A0605.